A 774-amino-acid chain; its full sequence is 5-methyltetrahydropteroyltriglutamate--homocysteine methyltransferase (774 aa).

5-methyltetrahydropteroyltri-L-glutamate-binding positions include 23 to 26 and Lys123; that span reads RELK. L-homocysteine-binding positions include 446-448 and Glu499; that span reads IGS. L-methionine-binding positions include 446–448 and Glu499; that span reads IGS. 5-methyltetrahydropteroyltri-L-glutamate is bound by residues 530–531 and Trp576; that span reads RC. Asp614 contributes to the L-homocysteine binding site. Residue Asp614 coordinates L-methionine. Glu620 is a 5-methyltetrahydropteroyltri-L-glutamate binding site. Residues His656, Cys658, and Glu680 each coordinate Zn(2+). The active-site Proton donor is the His709. Cys741 lines the Zn(2+) pocket.

It belongs to the vitamin-B12 independent methionine synthase family. Zn(2+) is required as a cofactor.

It carries out the reaction 5-methyltetrahydropteroyltri-L-glutamate + L-homocysteine = tetrahydropteroyltri-L-glutamate + L-methionine. The protein operates within amino-acid biosynthesis; L-methionine biosynthesis via de novo pathway; L-methionine from L-homocysteine (MetE route): step 1/1. Its function is as follows. Catalyzes the transfer of a methyl group from 5-methyltetrahydrofolate to homocysteine resulting in methionine formation. This is 5-methyltetrahydropteroyltriglutamate--homocysteine methyltransferase from Aliivibrio fischeri (strain MJ11) (Vibrio fischeri).